Here is a 129-residue protein sequence, read N- to C-terminus: Prefoldin subunit 6 (129 aa).

2 coiled-coil regions span residues 6–26 and 84–118; these read VRDL…IQKD and IEYI…LQQR.

This sequence belongs to the prefoldin subunit beta family. Heterohexamer of two PFD-alpha type and four PFD-beta type subunits forming prefoldin co-chaperone complex. Interacts with PFD2, PFD3, PFD4 and PFD5. Interacts with LSM8, a specific subunit of the LSM2-8 complex, which is a core component of the spliceosome. Binds to HSP90 to facilitate the formation of a larger complex made at least of HSP90, PFD6 and LSM8.

The protein localises to the cytoplasm. It is found in the nucleus. Its function is as follows. Binds specifically to cytosolic chaperonin (c-CPN) and transfers target proteins to it. Binds to nascent polypeptide chain and promotes folding in an environment in which there are many competing pathways for nonnative proteins. Together with other chaperonins, contribute to the regulation of gene expression by modulating the spliceosome function on pre-mRNA splicing post-transcriptionally by acting as a co-chaperone of Hsp90 to control levels of LSM8. Required for the biogenesis of tubulins and for subsequent microtubules (MTs) organization and dynamicity, but unable to associate with microtubules. Involved in the process leading to microtubules dissociation in response to gibberellic acid (GA) probably due to the DELLA proteins-mediated translocation of the prefoldin co-chaperone complex from the cytoplasm to the nucleus. Contributes to the GA-dependent regulation of PIN2 trafficking at the plasma membrane, thus influencing auxin flux. The sequence is that of Prefoldin subunit 6 from Arabidopsis thaliana (Mouse-ear cress).